We begin with the raw amino-acid sequence, 228 residues long: UPF0758 protein CLB_3028 (228 aa).

An MPN domain is found at 106–228; it reads KISTPLDVSN…YVSMKEKGTI (123 aa). Residues His-177, His-179, and Asp-190 each coordinate Zn(2+). Residues 177-190 carry the JAMM motif motif; sequence HNHPSGDPTPSKED.

The protein belongs to the UPF0758 family.

This chain is UPF0758 protein CLB_3028, found in Clostridium botulinum (strain ATCC 19397 / Type A).